Consider the following 87-residue polypeptide: uncharacterized protein (87 aa).

The segment at 67–87 (TGGDPREAVVRPADQVEGYTG) is disordered.

This is an uncharacterized protein from Mycobacterium bovis (strain ATCC BAA-935 / AF2122/97).